The chain runs to 205 residues: Ribonuclease HII (205 aa).

The region spanning 1–203 (MKAGIDEAGK…VSNLRQKTLD (203 aa)) is the RNase H type-2 domain. A divalent metal cation is bound by residues Asp6 and Glu7. Substrate is bound at residue Arg46. Asp101 contributes to the a divalent metal cation binding site. Lys143, Arg146, and Tyr164 together coordinate substrate.

This sequence belongs to the RNase HII family. Mn(2+) is required as a cofactor. Mg(2+) serves as cofactor.

Its subcellular location is the cytoplasm. The catalysed reaction is Endonucleolytic cleavage to 5'-phosphomonoester.. In terms of biological role, endonuclease that specifically degrades the RNA of RNA-DNA hybrids. This chain is Ribonuclease HII (rnhB), found in Archaeoglobus fulgidus (strain ATCC 49558 / DSM 4304 / JCM 9628 / NBRC 100126 / VC-16).